Reading from the N-terminus, the 637-residue chain is DNA mismatch repair protein MutL (637 aa).

The span at 343–352 (QQSPDRQVSP) shows a compositional bias: polar residues. The segment at 343-411 (QQSPDRQVSP…SARNGDVSLP (69 aa)) is disordered. Basic and acidic residues predominate over residues 365–380 (SIERKPSVSYDVRDSH). Residues 388 to 397 (YSSGSSSYRS) are compositionally biased toward low complexity.

This sequence belongs to the DNA mismatch repair MutL/HexB family.

This protein is involved in the repair of mismatches in DNA. It is required for dam-dependent methyl-directed DNA mismatch repair. May act as a 'molecular matchmaker', a protein that promotes the formation of a stable complex between two or more DNA-binding proteins in an ATP-dependent manner without itself being part of a final effector complex. This is DNA mismatch repair protein MutL from Shewanella halifaxensis (strain HAW-EB4).